The following is a 360-amino-acid chain: Glutamate 5-kinase (360 aa).

Lys-7 contributes to the ATP binding site. Residues Ser-47, Asp-134, and Asn-146 each coordinate substrate. ATP-binding positions include Thr-166–Asp-167 and Thr-208–Lys-214. Residues Val-273–Thr-344 form the PUA domain.

This sequence belongs to the glutamate 5-kinase family.

Its subcellular location is the cytoplasm. It catalyses the reaction L-glutamate + ATP = L-glutamyl 5-phosphate + ADP. Its pathway is amino-acid biosynthesis; L-proline biosynthesis; L-glutamate 5-semialdehyde from L-glutamate: step 1/2. Catalyzes the transfer of a phosphate group to glutamate to form L-glutamate 5-phosphate. This Prochlorococcus marinus (strain NATL2A) protein is Glutamate 5-kinase.